Here is a 133-residue protein sequence, read N- to C-terminus: Ribonucleases P/MRP protein subunit POP8 (133 aa).

Component of nuclear RNase P and RNase MRP complexes. RNase P consists of an RNA moiety and at least 9 protein subunits including POP1, POP3, POP4, POP5, POP6, POP7, POP8, RPP1 and RPR2. RNase MRP complex consists of an RNA moiety and at least 10 protein subunits including POP1, POP3, POP4, POP5, POP6, POP7, POP8, RMP1, RPP1 and SNM1, many of which are shared with the RNase P complex.

The protein localises to the nucleus. It carries out the reaction Endonucleolytic cleavage of RNA, removing 5'-extranucleotides from tRNA precursor.. Component of ribonuclease P, a protein complex that generates mature tRNA molecules by cleaving their 5'-ends. Also a component of RNase MRP, which cleaves pre-rRNA sequences. The protein is Ribonucleases P/MRP protein subunit POP8 (POP8) of Saccharomyces cerevisiae (strain ATCC 204508 / S288c) (Baker's yeast).